The following is a 34-amino-acid chain: Cytochrome c oxidase subunit 6B (34 aa).

The protein belongs to the cytochrome c oxidase subunit 6B family. Component of the cytochrome c oxidase (complex IV, CIV), a multisubunit enzyme composed of 14 subunits. The complex is composed of a catalytic core of 3 subunits MT-CO1, MT-CO2 and MT-CO3, encoded in the mitochondrial DNA, and 11 supernumerary subunits COX4I, COX5A, COX5B, COX6A, COX6B, COX6C, COX7A, COX7B, COX7C, COX8 and NDUFA4, which are encoded in the nuclear genome. The complex exists as a monomer or a dimer and forms supercomplexes (SCs) in the inner mitochondrial membrane with NADH-ubiquinone oxidoreductase (complex I, CI) and ubiquinol-cytochrome c oxidoreductase (cytochrome b-c1 complex, complex III, CIII), resulting in different assemblies (supercomplex SCI(1)III(2)IV(1) and megacomplex MCI(2)III(2)IV(2)). Post-translationally, the N-terminus is blocked.

It is found in the mitochondrion inner membrane. It participates in energy metabolism; oxidative phosphorylation. Functionally, component of the cytochrome c oxidase, the last enzyme in the mitochondrial electron transport chain which drives oxidative phosphorylation. The respiratory chain contains 3 multisubunit complexes succinate dehydrogenase (complex II, CII), ubiquinol-cytochrome c oxidoreductase (cytochrome b-c1 complex, complex III, CIII) and cytochrome c oxidase (complex IV, CIV), that cooperate to transfer electrons derived from NADH and succinate to molecular oxygen, creating an electrochemical gradient over the inner membrane that drives transmembrane transport and the ATP synthase. Cytochrome c oxidase is the component of the respiratory chain that catalyzes the reduction of oxygen to water. Electrons originating from reduced cytochrome c in the intermembrane space (IMS) are transferred via the dinuclear copper A center (CU(A)) of subunit 2 and heme A of subunit 1 to the active site in subunit 1, a binuclear center (BNC) formed by heme A3 and copper B (CU(B)). The BNC reduces molecular oxygen to 2 water molecules using 4 electrons from cytochrome c in the IMS and 4 protons from the mitochondrial matrix. The chain is Cytochrome c oxidase subunit 6B from Thunnus obesus (Bigeye tuna).